The sequence spans 289 residues: Cytochrome bc1 complex cytochrome c subunit (289 aa).

Positions 1–11 (MKKLGFTRSSR) are enriched in basic residues. The interval 1–28 (MKKLGFTRSSRRCSQPQEREQESERSRR) is disordered. Residues 37–55 (GLLLLVALTVSGGLAAVLT) traverse the membrane as a helical segment. Cytochrome c domains lie at 69 to 149 (ALLR…QANG) and 170 to 248 (TDLG…RTVI). The heme c site is built by Cys-82, Cys-85, His-86, Cys-183, Cys-186, and His-187. A helical membrane pass occupies residues 267-287 (GMAIWIIGMVTAIGLALWIGA).

As to quaternary structure, the cytochrome bc1 complex is composed of a cytochrome b (QcrB), the Rieske iron-sulfur protein (QcrA) and a diheme cytochrome c (QcrC) subunit. Post-translationally, binds 2 heme c groups covalently per subunit.

The protein resides in the cell membrane. The enzyme catalyses a quinol + 2 Fe(III)-[cytochrome c](out) = a quinone + 2 Fe(II)-[cytochrome c](out) + 2 H(+)(out). Cytochrome b subunit of the cytochrome bc1 complex, an essential component of the respiratory electron transport chain required for ATP synthesis. The bc1 complex catalyzes the oxidation of ubiquinol and the reduction of cytochrome c in the respiratory chain. The bc1 complex operates through a Q-cycle mechanism that couples electron transfer to generation of the proton gradient that drives ATP synthesis. The sequence is that of Cytochrome bc1 complex cytochrome c subunit (qcrC) from Mycobacterium leprae (strain TN).